A 253-amino-acid chain; its full sequence is Vitamin B12 import ATP-binding protein BtuD (253 aa).

The region spanning 4 to 236 (LQLSNVSVDT…NILSEVFEVD (233 aa)) is the ABC transporter domain. ATP is bound at residue 32–39 (GPNGAGKS).

It belongs to the ABC transporter superfamily. Vitamin B12 importer (TC 3.A.1.13.1) family. In terms of assembly, the complex is composed of two ATP-binding proteins (BtuD), two transmembrane proteins (BtuC) and a solute-binding protein (BtuF).

The protein resides in the cell inner membrane. It catalyses the reaction an R-cob(III)alamin(out) + ATP + H2O = an R-cob(III)alamin(in) + ADP + phosphate + H(+). Part of the ABC transporter complex BtuCDF involved in vitamin B12 import. Responsible for energy coupling to the transport system. In Yersinia enterocolitica serotype O:8 / biotype 1B (strain NCTC 13174 / 8081), this protein is Vitamin B12 import ATP-binding protein BtuD.